An 84-amino-acid polypeptide reads, in one-letter code: MVARHRAQAAADLASLAAAARLPSGLAAACARATLVARAMRVEHAQCRVVDLDVVVTVEVAVAFAGVATATARAGPAKVPTTPG.

The first 39 residues, 1–39, serve as a signal peptide directing secretion; it reads MVARHRAQAAADLASLAAAARLPSGLAAACARATLVARA.

Interacts with human polypyrimidine tract binding protein-associated splicing factor (PSF).

The protein localises to the secreted. Its subcellular location is the host cytoplasm. Functionally, effector protein that participates in the suppression of macrophage apoptosis by blocking the extrinsic pathway. Recognizes the host polypyrimidine tract binding protein-associated splicing factor (PSF), which probably leads to its cleavage, diminishing the level of caspase-8 in macrophages. This Mycobacterium tuberculosis (strain ATCC 25618 / H37Rv) protein is Apoptosis inhibitor Rv3654c.